The chain runs to 943 residues: Calcium-activated chloride channel regulator 2 (943 aa).

An N-terminal signal peptide occupies residues 1–31; it reads MTQRSIAGPICNLKFVTLLVALSSELPFLGA. Over 32 to 901 the chain is Extracellular; that stretch reads GVQLQDNGYN…SDPVPARDYL (870 aa). The interval 54–205 is metalloprotease domain; the sequence is NQNLISNIKE…CSSDITGIFV (152 aa). N-linked (GlcNAc...) asparagine glycosylation is found at N74 and N150. H164 is a Zn(2+) binding site. Residue E165 is part of the active site. Positions 168 and 175 each coordinate Zn(2+). An N-linked (GlcNAc...) asparagine glycan is attached at N231. A VWFA domain is found at 311-483; that stretch reads VVCLVLDVSS…NSMIDAFSRI (173 aa). Residues N522 and N822 are each glycosylated (N-linked (GlcNAc...) asparagine). The chain crosses the membrane as a helical span at residues 902-922; that stretch reads ILKGVLTAMGLIGIICLIIVV. The Cytoplasmic segment spans residues 923–943; sequence THHTLSRKKRADKKENGTKLL.

This sequence belongs to the CLCR family. Post-translationally, the 141 kDa mature form is autoproteolytically cleaved by the metalloprotease domain, producing a 109 kDa form and a 35 kDa form. The cleavage is necessary for calcium-activated chloride channel (CaCC) activation activity. N-glycosylated. As to expression, expressed in cornea, skin, vagina, esophagus, and larynx (at protein level). Expressed in trachea and mammary gland. Weakly expressed in testis and kidney. Highly expressed in corneal epithelium, colon and trachea. Moderately expressed in brain, urogenital organs, bladder, uterus and prostate. Highly expressed in tissues containing stratified epithelium including cornea, esophagus, larynx, skin and vagina than those tissues which contain only epithelial monolayers. Expressed in normal breast epithelium but not in breast cancer. Highly expressed during epithelial stratification. Expressed in endothelial cells of lung. Expressed selectively in endothelia of small pulmonary arteries, arterioles, and subpleural and interlobular venules.

It is found in the cell membrane. The protein localises to the basal cell membrane. Its subcellular location is the cell junction. It localises to the secreted. Plays a role in modulating chloride current across the plasma membrane in a calcium-dependent manner, and cell adhesion. Involved in basal cell adhesion and/or stratification of squamous epithelia. May act as a tumor suppressor in breast and colorectal cancer. Plays a key role for cell adhesion in the beginning stages of lung metastasis via the binding to ITGB4. The polypeptide is Calcium-activated chloride channel regulator 2 (CLCA2) (Homo sapiens (Human)).